The sequence spans 292 residues: Ribosomal protein L11 methyltransferase (292 aa).

Positions 145, 166, 188, and 229 each coordinate S-adenosyl-L-methionine.

It belongs to the methyltransferase superfamily. PrmA family.

Its subcellular location is the cytoplasm. The catalysed reaction is L-lysyl-[protein] + 3 S-adenosyl-L-methionine = N(6),N(6),N(6)-trimethyl-L-lysyl-[protein] + 3 S-adenosyl-L-homocysteine + 3 H(+). Methylates ribosomal protein L11. In Pseudoalteromonas atlantica (strain T6c / ATCC BAA-1087), this protein is Ribosomal protein L11 methyltransferase.